The following is a 218-amino-acid chain: 3,4-dihydroxy-2-butanone 4-phosphate synthase (218 aa).

Residues 38-39, D43, 151-155, and E175 each bind D-ribulose 5-phosphate; these read RE and RRGHT. E39 contacts Mg(2+). H154 lines the Mg(2+) pocket.

The protein belongs to the DHBP synthase family. In terms of assembly, homodimer. Requires Mg(2+) as cofactor. Mn(2+) is required as a cofactor.

It carries out the reaction D-ribulose 5-phosphate = (2S)-2-hydroxy-3-oxobutyl phosphate + formate + H(+). It functions in the pathway cofactor biosynthesis; riboflavin biosynthesis; 2-hydroxy-3-oxobutyl phosphate from D-ribulose 5-phosphate: step 1/1. In terms of biological role, catalyzes the conversion of D-ribulose 5-phosphate to formate and 3,4-dihydroxy-2-butanone 4-phosphate. The polypeptide is 3,4-dihydroxy-2-butanone 4-phosphate synthase (Vibrio cholerae serotype O1 (strain ATCC 39541 / Classical Ogawa 395 / O395)).